We begin with the raw amino-acid sequence, 99 residues long: MALTKAEMSEYLFEKLGLSKRDAKELVELFFEEVRRALENGEQVKLSGFGNFDLRDKNQRPGRNPKTGEDIPITARRVVTFRPGQKLKSRVENASPKES.

Residues 51–71 (NFDLRDKNQRPGRNPKTGEDI) form a disordered region.

The protein belongs to the bacterial histone-like protein family. Heterodimer of an alpha and a beta chain.

This protein is one of the two subunits of integration host factor, a specific DNA-binding protein that functions in genetic recombination as well as in transcriptional and translational control. This is Integration host factor subunit alpha (ihfA) from Dickeya dadantii (strain 3937) (Erwinia chrysanthemi (strain 3937)).